The primary structure comprises 243 residues: MSYSLRIADLPEDERPREKLLKYGAKHLGNAELIAILLATGQGKGKLSAVGLGQYILQQLGQNRQDPMDVLRNIHPQELIAFPGIGPAKATTILAAVELGKRVFQSRPLEKMVVDSPEAAAIALSQDLMWQTQEHFAIVMLDVKNRLLATKVITIGTATETLIHPREIFREVIKQGATRLIVAHNHPSGGLEPSPEDIRLTEFLLQGAQYLQIPVLDHLILGHGKHQSLRQCTDLWERFPQGD.

An MPN domain is found at 113–235 (VVDSPEAAAI…HQSLRQCTDL (123 aa)). Zn(2+) is bound by residues His-184, His-186, and Asp-197. The JAMM motif motif lies at 184 to 197 (HNHPSGGLEPSPED).

The protein belongs to the UPF0758 family.

The chain is UPF0758 protein sll0766 from Synechocystis sp. (strain ATCC 27184 / PCC 6803 / Kazusa).